We begin with the raw amino-acid sequence, 192 residues long: ADP-ribosylation factor-like protein 14 (192 aa).

Gly-2 carries the N-myristoyl glycine lipid modification. Residues 20–27, 64–68, and 123–126 contribute to the GTP site; these read GLDSAGKS, DVGGQ, and NKQD.

This sequence belongs to the small GTPase superfamily. Arf family. Interacts with ARL14EP. As to expression, expressed in immature dendritic cells.

Its subcellular location is the cytoplasmic vesicle. In terms of biological role, GTPase that recruits MYO1E to MHC class II-containing vesicles via the effector protein ARL14EP and hence controls the movement of these vesicles along the actin cytoskeleton in dendritic cells. In Homo sapiens (Human), this protein is ADP-ribosylation factor-like protein 14 (ARL14).